Here is a 90-residue protein sequence, read N- to C-terminus: MSRTVMCRKYHEELPGLDRPPYPGAKGEDIYNNVSRKAWDEWQKHQTMLINERRLNMMNAEDRKFLQQEMDKFLSGEDYAKADGYVPPSA.

It belongs to the Fe(2+)-trafficking protein family.

In terms of biological role, could be a mediator in iron transactions between iron acquisition and iron-requiring processes, such as synthesis and/or repair of Fe-S clusters in biosynthetic enzymes. In Pseudomonas aeruginosa (strain UCBPP-PA14), this protein is Probable Fe(2+)-trafficking protein.